A 328-amino-acid polypeptide reads, in one-letter code: tRNA dimethylallyltransferase (328 aa).

ATP is bound at residue glycine 25–threonine 32. Substrate is bound at residue threonine 27–threonine 32. The tract at residues aspartate 50–glutamine 53 is interaction with substrate tRNA.

Belongs to the IPP transferase family. Monomer. It depends on Mg(2+) as a cofactor.

The catalysed reaction is adenosine(37) in tRNA + dimethylallyl diphosphate = N(6)-dimethylallyladenosine(37) in tRNA + diphosphate. Catalyzes the transfer of a dimethylallyl group onto the adenine at position 37 in tRNAs that read codons beginning with uridine, leading to the formation of N6-(dimethylallyl)adenosine (i(6)A). In Halothermothrix orenii (strain H 168 / OCM 544 / DSM 9562), this protein is tRNA dimethylallyltransferase.